Here is a 341-residue protein sequence, read N- to C-terminus: Phosphate acyltransferase (341 aa).

Belongs to the PlsX family. In terms of assembly, homodimer. Probably interacts with PlsY.

The protein resides in the cytoplasm. It carries out the reaction a fatty acyl-[ACP] + phosphate = an acyl phosphate + holo-[ACP]. Its pathway is lipid metabolism; phospholipid metabolism. Catalyzes the reversible formation of acyl-phosphate (acyl-PO(4)) from acyl-[acyl-carrier-protein] (acyl-ACP). This enzyme utilizes acyl-ACP as fatty acyl donor, but not acyl-CoA. In Pseudoalteromonas atlantica (strain T6c / ATCC BAA-1087), this protein is Phosphate acyltransferase.